Here is a 295-residue protein sequence, read N- to C-terminus: MSKSSKLCCKTSCPRSNIFCSLVDKVFKRPSLQSLHQWGYHCYEPRVYRTLAKILRYVDLEGFDILLSDYIAFVEKSGCHLEVNFNLEFTEICVNTILYWVFARKGNPDFVELLLKKTKDYVQDRSFNLALIWRTFTPVYCPSPLSGITPLLYVAQTRQSNILKILLQYGILERENNPINIVLTILLYPSRVRIMVDHELVDIEEDAKTCLVLCSRVLSTISIREIEMQLSLGRRPIISNWLDYIPSTRYKDPCELLHLCRITIRAQLLTNNMLPNGIFSLLIPVCLQNYLNLES.

The ANK repeat unit spans residues 146–176; the sequence is SGITPLLYVAQTRQSNILKILLQYGILEREN. In terms of domain architecture, SOCS box spans 232–295; it reads LGRRPIISNW…CLQNYLNLES (64 aa).

Belongs to the ankyrin SOCS box (ASB) family.

Its pathway is protein modification; protein ubiquitination. May be a substrate-recognition component of a SCF-like ECS (Elongin-Cullin-SOCS-box protein) E3 ubiquitin-protein ligase complex which mediates the ubiquitination and subsequent proteasomal degradation of target proteins. This chain is Ankyrin repeat and SOCS box protein 17 (ASB17), found in Bos taurus (Bovine).